The following is a 268-amino-acid chain: MEMO1 family protein Ta0237 (268 aa).

This sequence belongs to the MEMO1 family.

This Thermoplasma acidophilum (strain ATCC 25905 / DSM 1728 / JCM 9062 / NBRC 15155 / AMRC-C165) protein is MEMO1 family protein Ta0237.